We begin with the raw amino-acid sequence, 303 residues long: DnaJ homolog subfamily C member 17 (303 aa).

The J domain occupies 11–76; it reads DLYALLGIEE…AARAAYDKVR (66 aa). Disordered regions lie at residues 104 to 123 and 150 to 170; these read ERQA…SATT and IRQD…GKGT. A Phosphoserine modification is found at Ser112. Residues 150–166 are compositionally biased toward basic and acidic residues; the sequence is IRQDREQRLRGRTENTE. In terms of domain architecture, RRM spans 178 to 249; the sequence is KCKKEDESQG…NPLKVSWLEG (72 aa). Lys264 carries the post-translational modification N6-methyllysine.

Expressed in the thyroid gland.

It is found in the cytoplasm. It localises to the nucleus. Functionally, may negatively affect PAX8-induced thyroglobulin/TG transcription. The sequence is that of DnaJ homolog subfamily C member 17 (Dnajc17) from Mus musculus (Mouse).